The chain runs to 519 residues: Maturase K (519 aa).

This sequence belongs to the intron maturase 2 family. MatK subfamily.

The protein localises to the plastid. Its subcellular location is the chloroplast. Usually encoded in the trnK tRNA gene intron. Probably assists in splicing its own and other chloroplast group II introns. The protein is Maturase K of Dioscorea elephantipes (Elephant's foot yam).